A 256-amino-acid polypeptide reads, in one-letter code: tRNA (guanine-N(1)-)-methyltransferase (256 aa).

S-adenosyl-L-methionine is bound by residues Gly-113 and 132–137; that span reads VGDYVL.

The protein belongs to the RNA methyltransferase TrmD family. In terms of assembly, homodimer.

It is found in the cytoplasm. It carries out the reaction guanosine(37) in tRNA + S-adenosyl-L-methionine = N(1)-methylguanosine(37) in tRNA + S-adenosyl-L-homocysteine + H(+). In terms of biological role, specifically methylates guanosine-37 in various tRNAs. This is tRNA (guanine-N(1)-)-methyltransferase from Coprothermobacter proteolyticus (strain ATCC 35245 / DSM 5265 / OCM 4 / BT).